A 101-amino-acid polypeptide reads, in one-letter code: ATP-dependent Clp protease adapter protein ClpS 2 (101 aa).

Belongs to the ClpS family. Binds to the N-terminal domain of the chaperone ClpA.

Functionally, involved in the modulation of the specificity of the ClpAP-mediated ATP-dependent protein degradation. This Rhizobium meliloti (strain 1021) (Ensifer meliloti) protein is ATP-dependent Clp protease adapter protein ClpS 2.